Reading from the N-terminus, the 58-residue chain is Small ribosomal subunit protein bS21 (58 aa).

It belongs to the bacterial ribosomal protein bS21 family.

The protein is Small ribosomal subunit protein bS21 of Streptococcus pyogenes serotype M49 (strain NZ131).